A 433-amino-acid polypeptide reads, in one-letter code: Probable mannose-6-phosphate isomerase (433 aa).

Positions 103, 105, 130, and 277 each coordinate Zn(2+). The active site involves Arg296.

This sequence belongs to the mannose-6-phosphate isomerase type 1 family. Requires Zn(2+) as cofactor.

It localises to the cytoplasm. The catalysed reaction is D-mannose 6-phosphate = D-fructose 6-phosphate. It functions in the pathway nucleotide-sugar biosynthesis; GDP-alpha-D-mannose biosynthesis; alpha-D-mannose 1-phosphate from D-fructose 6-phosphate: step 1/2. Functionally, involved in the synthesis of the GDP-mannose and dolichol-phosphate-mannose required for a number of critical mannosyl transfer reactions. This Echinococcus multilocularis (Fox tapeworm) protein is Probable mannose-6-phosphate isomerase (PMIH).